We begin with the raw amino-acid sequence, 272 residues long: Large ribosomal subunit protein uL2 (272 aa).

Positions 247–272 (PWGQPCKGFKTRNNKRTNSSIIKRRK) are disordered. The span at 262-272 (RTNSSIIKRRK) shows a compositional bias: polar residues.

This sequence belongs to the universal ribosomal protein uL2 family. In terms of assembly, part of the 50S ribosomal subunit. Forms a bridge to the 30S subunit in the 70S ribosome.

In terms of biological role, one of the primary rRNA binding proteins. Required for association of the 30S and 50S subunits to form the 70S ribosome, for tRNA binding and peptide bond formation. It has been suggested to have peptidyltransferase activity; this is somewhat controversial. Makes several contacts with the 16S rRNA in the 70S ribosome. This chain is Large ribosomal subunit protein uL2, found in Bdellovibrio bacteriovorus (strain ATCC 15356 / DSM 50701 / NCIMB 9529 / HD100).